Consider the following 184-residue polypeptide: ATP synthase subunit b, chloroplastic (184 aa).

Residues 27-49 (LATNPINLSVVLGVLIFFGKGVL) form a helical membrane-spanning segment.

The protein belongs to the ATPase B chain family. F-type ATPases have 2 components, F(1) - the catalytic core - and F(0) - the membrane proton channel. F(1) has five subunits: alpha(3), beta(3), gamma(1), delta(1), epsilon(1). F(0) has four main subunits: a(1), b(1), b'(1) and c(10-14). The alpha and beta chains form an alternating ring which encloses part of the gamma chain. F(1) is attached to F(0) by a central stalk formed by the gamma and epsilon chains, while a peripheral stalk is formed by the delta, b and b' chains.

It is found in the plastid. It localises to the chloroplast thylakoid membrane. Functionally, f(1)F(0) ATP synthase produces ATP from ADP in the presence of a proton or sodium gradient. F-type ATPases consist of two structural domains, F(1) containing the extramembraneous catalytic core and F(0) containing the membrane proton channel, linked together by a central stalk and a peripheral stalk. During catalysis, ATP synthesis in the catalytic domain of F(1) is coupled via a rotary mechanism of the central stalk subunits to proton translocation. Component of the F(0) channel, it forms part of the peripheral stalk, linking F(1) to F(0). This is ATP synthase subunit b, chloroplastic from Populus alba (White poplar).